Reading from the N-terminus, the 56-residue chain is Large ribosomal subunit protein bL32 (56 aa).

The disordered stretch occupies residues 1–37 (MAVQQNKPTRSKRGMRRSHDALTAPLLSVDKTSGETH).

Belongs to the bacterial ribosomal protein bL32 family.

The chain is Large ribosomal subunit protein bL32 from Photorhabdus laumondii subsp. laumondii (strain DSM 15139 / CIP 105565 / TT01) (Photorhabdus luminescens subsp. laumondii).